We begin with the raw amino-acid sequence, 968 residues long: RNA polymerase-associated protein RapA (968 aa).

The region spanning 164-334 (DVGRRHAPRV…FARLRLLDPN (171 aa)) is the Helicase ATP-binding domain. Position 177 to 184 (177 to 184 (DEVGLGKT)) interacts with ATP. A DEAH box motif is present at residues 280–283 (DEAH). Positions 490-644 (RVEWLMGYLT…TCPTGRAIYD (155 aa)) constitute a Helicase C-terminal domain.

Belongs to the SNF2/RAD54 helicase family. RapA subfamily. As to quaternary structure, interacts with the RNAP. Has a higher affinity for the core RNAP than for the holoenzyme. Its ATPase activity is stimulated by binding to RNAP.

Functionally, transcription regulator that activates transcription by stimulating RNA polymerase (RNAP) recycling in case of stress conditions such as supercoiled DNA or high salt concentrations. Probably acts by releasing the RNAP, when it is trapped or immobilized on tightly supercoiled DNA. Does not activate transcription on linear DNA. Probably not involved in DNA repair. In Salmonella arizonae (strain ATCC BAA-731 / CDC346-86 / RSK2980), this protein is RNA polymerase-associated protein RapA.